The chain runs to 91 residues: DNA-directed RNA polymerase subunit omega (91 aa).

It belongs to the RNA polymerase subunit omega family. As to quaternary structure, the RNAP catalytic core consists of 2 alpha, 1 beta, 1 beta' and 1 omega subunit. When a sigma factor is associated with the core the holoenzyme is formed, which can initiate transcription.

The enzyme catalyses RNA(n) + a ribonucleoside 5'-triphosphate = RNA(n+1) + diphosphate. Functionally, promotes RNA polymerase assembly. Latches the N- and C-terminal regions of the beta' subunit thereby facilitating its interaction with the beta and alpha subunits. The polypeptide is DNA-directed RNA polymerase subunit omega (Actinobacillus pleuropneumoniae serotype 5b (strain L20)).